The sequence spans 217 residues: Putative threonylcarbamoyl-AMP synthase (217 aa).

The YrdC-like domain occupies 14–199; the sequence is SRGIVSAVGA…TPRVLRPGPV (186 aa).

The protein belongs to the SUA5 family.

The protein localises to the cytoplasm. It carries out the reaction L-threonine + hydrogencarbonate + ATP = L-threonylcarbamoyladenylate + diphosphate + H2O. Functionally, required for the formation of a threonylcarbamoyl group on adenosine at position 37 (t(6)A37) in tRNAs that read codons beginning with adenine. Catalyzes the conversion of L-threonine, HCO(3)(-)/CO(2) and ATP to give threonylcarbamoyl-AMP (TC-AMP) as the acyladenylate intermediate, with the release of diphosphate. This is Putative threonylcarbamoyl-AMP synthase from Mycobacterium tuberculosis (strain CDC 1551 / Oshkosh).